The sequence spans 542 residues: Neutral amino acid transporter B(0) (542 aa).

Position 1 is an N-acetylmethionine (M1). Over M1–A52 the chain is Cytoplasmic. The helical transmembrane segment at N53–L82 threads the bilayer. Residues G83–E95 lie on the Extracellular side of the membrane. Residues L96–A117 traverse the membrane as a helical segment. The Cytoplasmic segment spans residues A118–W131. Residues A132 to L154 traverse the membrane as a helical segment. The Extracellular segment spans residues Q155–Q225. N164 and N213 each carry an N-linked (GlcNAc...) asparagine glycan. A helical transmembrane segment spans residues E226 to L249. Over G250–R258 the chain is Cytoplasmic. Residues F259–V286 form a helical membrane-spanning segment. Topologically, residues A287 to I307 are extracellular. Residues L308–F329 form a helical membrane-spanning segment. The Cytoplasmic portion of the chain corresponds to T330–P334. The discontinuously helical intramembrane region spans Y335 to V365. Over E366 to H374 the chain is Cytoplasmic. Residues I375–F401 traverse the membrane as a helical segment. 3 residues coordinate Na(+): G383, T385, and N387. The Extracellular portion of the chain corresponds to I402–K414. The discontinuously helical intramembrane region spans I415–N448. Topologically, residues L449 to D461 are extracellular. A helical membrane pass occupies residues W462 to L483. Residues N472 and D476 each contribute to the Na(+) site. Over Q484–M542 the chain is Cytoplasmic. Position 494 is a phosphoserine (S494). Residue T495 is modified to Phosphothreonine. Phosphoserine occurs at positions 504, 536, and 540. Residues D509–M542 form a disordered region.

Belongs to the dicarboxylate/amino acid:cation symporter (DAACS) (TC 2.A.23) family. SLC1A5 subfamily. Homotrimer.

It localises to the cell membrane. The protein localises to the melanosome. The catalysed reaction is L-glutamine(out) + L-serine(in) + Na(+)(out) = L-glutamine(in) + L-serine(out) + Na(+)(in). The enzyme catalyses L-glutamine(in) + L-serine(out) + Na(+)(out) = L-glutamine(out) + L-serine(in) + Na(+)(in). It catalyses the reaction L-threonine(in) + L-glutamine(out) + Na(+)(out) = L-threonine(out) + L-glutamine(in) + Na(+)(in). It carries out the reaction L-threonine(out) + L-glutamine(in) + Na(+)(out) = L-threonine(in) + L-glutamine(out) + Na(+)(in). The catalysed reaction is L-asparagine(in) + L-glutamine(out) + Na(+)(out) = L-asparagine(out) + L-glutamine(in) + Na(+)(in). The enzyme catalyses L-asparagine(out) + L-glutamine(in) + Na(+)(out) = L-asparagine(in) + L-glutamine(out) + Na(+)(in). It catalyses the reaction L-glutamine(in) + L-alanine(out) + Na(+)(out) = L-glutamine(out) + L-alanine(in) + Na(+)(in). It carries out the reaction L-valine(out) + L-glutamine(in) + Na(+)(out) = L-valine(in) + L-glutamine(out) + Na(+)(in). The catalysed reaction is L-glutamine(in) + L-methionine(out) + Na(+)(out) = L-glutamine(out) + L-methionine(in) + Na(+)(in). The enzyme catalyses L-glutamine(in) + L-glutamate(out) + Na(+)(out) + H(+)(out) = L-glutamine(out) + L-glutamate(in) + Na(+)(in) + H(+)(in). It catalyses the reaction D-serine(in) + L-glutamine(out) + Na(+)(out) = D-serine(out) + L-glutamine(in) + Na(+)(in). It carries out the reaction D-serine(in) + L-alanine(out) + Na(+)(out) = D-serine(out) + L-alanine(in) + Na(+)(in). The catalysed reaction is nitrate(in) = nitrate(out). The enzyme catalyses iodide(out) = iodide(in). It catalyses the reaction thiocyanate(in) = thiocyanate(out). Functionally, sodium-coupled antiporter of neutral amino acids. In a tri-substrate transport cycle, exchanges neutral amino acids between the extracellular and intracellular compartments, coupled to the inward cotransport of at least one sodium ion. The preferred substrate is the essential amino acid L-glutamine, a precursor for biosynthesis of proteins, nucleotides and amine sugars as well as an alternative fuel for mitochondrial oxidative phosphorylation. Exchanges L-glutamine with other neutral amino acids such as L-serine, L-threonine and L-asparagine in a bidirectional way. Provides L-glutamine to proliferating stem and activated cells driving the metabolic switch toward cell differentiation. The transport cycle is usually pH-independent, with the exception of L-glutamate. Transports extracellular L-glutamate coupled to the cotransport of one proton and one sodium ion in exchange for intracellular L-glutamine counter-ion. May provide for L-glutamate uptake in glial cells regulating glutamine/glutamate cycle in the nervous system. Can transport D-amino acids. Mediates D-serine release from the retinal glia potentially affecting NMDA receptor function in retinal neurons. Displays sodium- and amino acid-dependent but uncoupled channel-like anion conductance with a preference SCN(-) &gt;&gt; NO3(-) &gt; I(-) &gt; Cl(-). Through binding of the fusogenic protein syncytin-1/ERVW-1 may mediate trophoblasts syncytialization, the spontaneous fusion of their plasma membranes, an essential process in placental development. The polypeptide is Neutral amino acid transporter B(0) (SLC1A5) (Macaca fascicularis (Crab-eating macaque)).